Here is a 506-residue protein sequence, read N- to C-terminus: Beta-glucosidase 13 (506 aa).

The N-terminal stretch at 1–25 (MAAAGEVVMLGGILLPLLLVVAVSG) is a signal peptide. Gln-49 lines the a beta-D-glucoside pocket. Asn-118 carries N-linked (GlcNAc...) asparagine glycosylation. Residues His-153 and 198-199 (NE) each bind a beta-D-glucoside. The active-site Proton donor is Glu-199. Cys-219 and Cys-226 are oxidised to a cystine. A glycan (N-linked (GlcNAc...) asparagine) is linked at Asn-225. An a beta-D-glucoside-binding site is contributed by Tyr-342. N-linked (GlcNAc...) asparagine glycosylation is found at Asn-357 and Asn-367. Glu-413 lines the a beta-D-glucoside pocket. Glu-413 serves as the catalytic Nucleophile. Asn-421 carries an N-linked (GlcNAc...) asparagine glycan. A beta-D-glucoside contacts are provided by residues Trp-462, 469–470 (EW), and Phe-478.

It belongs to the glycosyl hydrolase 1 family.

It carries out the reaction Hydrolysis of terminal, non-reducing beta-D-glucosyl residues with release of beta-D-glucose.. This chain is Beta-glucosidase 13 (BGLU13), found in Oryza sativa subsp. japonica (Rice).